Consider the following 624-residue polypeptide: Probable potassium transport system protein Kup (624 aa).

A run of 12 helical transmembrane segments spans residues 16-36 (ALLT…SPLY), 59-79 (IISM…VMLV), 106-126 (FVAV…VITP), 147-167 (FILP…PLGT), 174-194 (FGPI…PQII), 211-231 (LIVA…LTVT), 252-272 (WFCV…ALVI), 292-312 (IPLV…VISG), 342-362 (IYMP…VLVF), 371-391 (AYGL…LIYV), 394-414 (TWWK…LLFA), and 418-438 (TKIH…IVVM).

Belongs to the HAK/KUP transporter (TC 2.A.72) family.

The protein resides in the cell membrane. It carries out the reaction K(+)(in) + H(+)(in) = K(+)(out) + H(+)(out). In terms of biological role, transport of potassium into the cell. Likely operates as a K(+):H(+) symporter. This Corynebacterium glutamicum (strain ATCC 13032 / DSM 20300 / JCM 1318 / BCRC 11384 / CCUG 27702 / LMG 3730 / NBRC 12168 / NCIMB 10025 / NRRL B-2784 / 534) protein is Probable potassium transport system protein Kup.